The chain runs to 391 residues: Protein Wnt-2b (391 aa).

5 disulfide bridges follow: Cys-107-Cys-118, Cys-158-Cys-166, Cys-168-Cys-188, Cys-237-Cys-251, and Cys-239-Cys-246. N-linked (GlcNAc...) asparagine glycosylation is present at Asn-117. Ser-243 carries O-palmitoleoyl serine; by PORCN lipidation. An N-linked (GlcNAc...) asparagine glycan is attached at Asn-283. 6 disulfide bridges follow: Cys-309–Cys-340, Cys-325–Cys-335, Cys-339–Cys-379, Cys-355–Cys-370, Cys-357–Cys-367, and Cys-362–Cys-363.

It belongs to the Wnt family. Forms a soluble 1:1 complex with AFM; this prevents oligomerization and is required for prolonged biological activity. The complex with AFM may represent the physiological form in body fluids. Interacts with FZD4 and FZD5. Post-translationally, palmitoleoylation is required for efficient binding to frizzled receptors. Depalmitoleoylation leads to Wnt signaling pathway inhibition. As to expression, isoform 1 is expressed in adult heart, brain, placenta, lung, prostate, testis, ovary, small intestine and colon. In the adult brain, it is mainly found in the caudate nucleus, subthalamic nucleus and thalamus. Also detected in fetal brain, lung and kidney. Isoform 2 is expressed in fetal brain, fetal lung, fetal kidney, caudate nucleus, testis and cancer cell lines.

The protein localises to the secreted. It localises to the extracellular space. The protein resides in the extracellular matrix. Functionally, ligand for members of the frizzled family of seven transmembrane receptors. Functions in the canonical Wnt/beta-catenin signaling pathway. Plays a redundant role in embryonic lung development. In Homo sapiens (Human), this protein is Protein Wnt-2b (WNT2B).